The following is an 891-amino-acid chain: Valine--tRNA ligase (891 aa).

Positions 43 to 53 (PFTSGTLHLGH) match the 'HIGH' region motif. Residues 536 to 540 (KMSKS) carry the 'KMSKS' region motif. Lys-539 provides a ligand contact to ATP.

Belongs to the class-I aminoacyl-tRNA synthetase family. ValS type 2 subfamily.

Its subcellular location is the cytoplasm. The catalysed reaction is tRNA(Val) + L-valine + ATP = L-valyl-tRNA(Val) + AMP + diphosphate. In terms of biological role, catalyzes the attachment of valine to tRNA(Val). As ValRS can inadvertently accommodate and process structurally similar amino acids such as threonine, to avoid such errors, it has a 'posttransfer' editing activity that hydrolyzes mischarged Thr-tRNA(Val) in a tRNA-dependent manner. This Pyrococcus furiosus (strain ATCC 43587 / DSM 3638 / JCM 8422 / Vc1) protein is Valine--tRNA ligase.